Reading from the N-terminus, the 216-residue chain is MSLPMLQVALDNQTMDSAYETTRLIAEEVDIIEVGTILCVGEGVRAVRDLKALYPHKIVLADAKIADAGKILSRMCFEANADWVTVICCADINTAKGALDVAKEFNGDVQIELTGYWTWEQAQQWRDAGIQQVVYHRSRDAQAAGVAWGEADITAIKRLSDMGFKVTVTGGLALEDLPLFKGIPIHVFIAGRSIRDAASPVEAARQFKRSIAELWG.

Position 11 (aspartate 11) interacts with substrate. Mg(2+) is bound by residues glutamate 33 and aspartate 62. Residue arginine 192 coordinates substrate.

It belongs to the HPS/KGPDC family. KGPDC subfamily. As to quaternary structure, homodimer. The cofactor is Mg(2+).

It carries out the reaction 3-dehydro-L-gulonate 6-phosphate + H(+) = L-xylulose 5-phosphate + CO2. The protein operates within cofactor degradation; L-ascorbate degradation; D-xylulose 5-phosphate from L-ascorbate: step 2/4. Catalyzes the decarboxylation of 3-keto-L-gulonate-6-P into L-xylulose-5-P. Is involved in the anaerobic L-ascorbate utilization. This chain is 3-keto-L-gulonate-6-phosphate decarboxylase UlaD, found in Escherichia coli O139:H28 (strain E24377A / ETEC).